The primary structure comprises 277 residues: Large ribosomal subunit protein mL46 (277 aa).

K228 carries the post-translational modification N6-acetyllysine.

This sequence belongs to the mitochondrion-specific ribosomal protein mL46 family. In terms of assembly, component of the mitochondrial ribosome large subunit (39S) which comprises a 16S rRNA and about 50 distinct proteins.

It is found in the mitochondrion. This is Large ribosomal subunit protein mL46 (MRPL46) from Bos taurus (Bovine).